Consider the following 230-residue polypeptide: Small ribosomal subunit protein uS3 (230 aa).

The KH type-2 domain occupies 39-107; it reads VRKFLVEKLQ…PAQINIAEIR (69 aa).

The protein belongs to the universal ribosomal protein uS3 family. Part of the 30S ribosomal subunit. Forms a tight complex with proteins S10 and S14.

Functionally, binds the lower part of the 30S subunit head. Binds mRNA in the 70S ribosome, positioning it for translation. The chain is Small ribosomal subunit protein uS3 from Shewanella putrefaciens (strain CN-32 / ATCC BAA-453).